The primary structure comprises 265 residues: Histidine racemase (265 aa).

The active-site Proton acceptor is the C67. The active-site Proton donor is C209.

The protein belongs to the histidine racemase family. Homodimer.

It carries out the reaction L-histidine = D-histidine. With respect to regulation, activity is not affected by buffer composition (PO(4) or Tris), ions (SO(4)(2-), Mg(2+) and EDTA) or the PLP inhibitor hydroxylamine. However, the activity is hindered by iodoacetamide and Hg(2+), which are known inhibitors of enzymes with catalytic thiols. Its function is as follows. Cofactor-independent isomerase that catalyzes the reversible conversion of L-histidine to D-histidine. Shows weak activity with L,L-lanthionine. The catalytic turnover is 10'000-fold faster with L-histidine than with L,L-lanthionine. May play a role in growth of F.nucleatum. The polypeptide is Histidine racemase (Fusobacterium nucleatum subsp. nucleatum (strain ATCC 25586 / DSM 15643 / BCRC 10681 / CIP 101130 / JCM 8532 / KCTC 2640 / LMG 13131 / VPI 4355)).